We begin with the raw amino-acid sequence, 253 residues long: Ribosomal RNA small subunit methyltransferase I (253 aa).

Residues 230-246 (RKEQRSQRSFSKGDKKP) are compositionally biased toward basic and acidic residues. Positions 230 to 253 (RKEQRSQRSFSKGDKKPSFKRFKK) are disordered.

The protein belongs to the methyltransferase superfamily. RsmI family.

It localises to the cytoplasm. The enzyme catalyses cytidine(1402) in 16S rRNA + S-adenosyl-L-methionine = 2'-O-methylcytidine(1402) in 16S rRNA + S-adenosyl-L-homocysteine + H(+). In terms of biological role, catalyzes the 2'-O-methylation of the ribose of cytidine 1402 (C1402) in 16S rRNA. The protein is Ribosomal RNA small subunit methyltransferase I of Leptospira borgpetersenii serovar Hardjo-bovis (strain L550).